The sequence spans 424 residues: UDP-N-acetylglucosamine 1-carboxyvinyltransferase (424 aa).

Residue 22–23 (KN) participates in phosphoenolpyruvate binding. Arg-93 contacts UDP-N-acetyl-alpha-D-glucosamine. Cys-117 serves as the catalytic Proton donor. At Cys-117 the chain carries 2-(S-cysteinyl)pyruvic acid O-phosphothioketal. UDP-N-acetyl-alpha-D-glucosamine contacts are provided by residues 122-126 (RPIDL), Asp-307, and Val-329.

Belongs to the EPSP synthase family. MurA subfamily.

It is found in the cytoplasm. It catalyses the reaction phosphoenolpyruvate + UDP-N-acetyl-alpha-D-glucosamine = UDP-N-acetyl-3-O-(1-carboxyvinyl)-alpha-D-glucosamine + phosphate. Its pathway is cell wall biogenesis; peptidoglycan biosynthesis. In terms of biological role, cell wall formation. Adds enolpyruvyl to UDP-N-acetylglucosamine. The sequence is that of UDP-N-acetylglucosamine 1-carboxyvinyltransferase from Chlorobium limicola (strain DSM 245 / NBRC 103803 / 6330).